The sequence spans 201 residues: 3-isopropylmalate dehydratase small subunit (201 aa).

It belongs to the LeuD family. LeuD type 1 subfamily. Heterodimer of LeuC and LeuD.

It carries out the reaction (2R,3S)-3-isopropylmalate = (2S)-2-isopropylmalate. The protein operates within amino-acid biosynthesis; L-leucine biosynthesis; L-leucine from 3-methyl-2-oxobutanoate: step 2/4. Its function is as follows. Catalyzes the isomerization between 2-isopropylmalate and 3-isopropylmalate, via the formation of 2-isopropylmaleate. This is 3-isopropylmalate dehydratase small subunit from Escherichia coli O45:K1 (strain S88 / ExPEC).